An 89-amino-acid chain; its full sequence is Acylphosphatase (89 aa).

Residues 3–89 enclose the Acylphosphatase-like domain; that stretch reads QKHLQVFGTV…SEDFSDFKSI (87 aa). Residues R18 and N36 contribute to the active site.

It belongs to the acylphosphatase family.

It carries out the reaction an acyl phosphate + H2O = a carboxylate + phosphate + H(+). The sequence is that of Acylphosphatase (acyP) from Staphylococcus haemolyticus (strain JCSC1435).